The chain runs to 33 residues: Suppressor protein HFN40 (33 aa).

Its function is as follows. Suppresses expansion of husk leaf blades. The protein is Suppressor protein HFN40 of Zea mays (Maize).